The chain runs to 272 residues: MLIHPQFDPVAIHLGPLAIRWYGLMYLAGFIMFLGFGRLRIRQPHIAAKGWTTRDLDDMLFFGVLGVILGGRLGYVLFYKPSYYLAHPLEILKVWEGGMAFHGGFLGVVVAMWLFGKLRRRHWMEVTDFIAPMIPCGLAAGRIGNFINGELWGRATDLPWGMIFPQAGDNIPRHPSQLYQFAGEGVALFIVLWLFARKPRPMGAVSGVFLIGYGAFRFAAEFAREPDNFLGLLALKLSMGQWLSLPMILAGIAMVVWAYRRQPGAGASQPVA.

The next 7 membrane-spanning stretches (helical) occupy residues 17–37 (LAIR…LGFG), 59–79 (MLFF…VLFY), 95–115 (WEGG…MWLF), 129–149 (FIAP…FING), 176–196 (SQLY…WLFA), 202–222 (MGAV…AAEF), and 237–257 (LSMG…MVVW). Arginine 142 is an a 1,2-diacyl-sn-glycero-3-phospho-(1'-sn-glycerol) binding site.

Belongs to the Lgt family.

It is found in the cell inner membrane. It catalyses the reaction L-cysteinyl-[prolipoprotein] + a 1,2-diacyl-sn-glycero-3-phospho-(1'-sn-glycerol) = an S-1,2-diacyl-sn-glyceryl-L-cysteinyl-[prolipoprotein] + sn-glycerol 1-phosphate + H(+). It functions in the pathway protein modification; lipoprotein biosynthesis (diacylglyceryl transfer). Functionally, catalyzes the transfer of the diacylglyceryl group from phosphatidylglycerol to the sulfhydryl group of the N-terminal cysteine of a prolipoprotein, the first step in the formation of mature lipoproteins. The polypeptide is Phosphatidylglycerol--prolipoprotein diacylglyceryl transferase (Cupriavidus necator (strain ATCC 17699 / DSM 428 / KCTC 22496 / NCIMB 10442 / H16 / Stanier 337) (Ralstonia eutropha)).